The following is a 93-amino-acid chain: Small ribosomal subunit protein uS19 (93 aa).

The protein belongs to the universal ribosomal protein uS19 family.

Its function is as follows. Protein S19 forms a complex with S13 that binds strongly to the 16S ribosomal RNA. The polypeptide is Small ribosomal subunit protein uS19 (Dehalococcoides mccartyi (strain ATCC BAA-2266 / KCTC 15142 / 195) (Dehalococcoides ethenogenes (strain 195))).